A 270-amino-acid chain; its full sequence is Putative pyruvate, phosphate dikinase regulatory protein (270 aa).

148-155 (GISRTSKT) contacts ADP.

This sequence belongs to the pyruvate, phosphate/water dikinase regulatory protein family. PDRP subfamily.

It catalyses the reaction N(tele)-phospho-L-histidyl/L-threonyl-[pyruvate, phosphate dikinase] + ADP = N(tele)-phospho-L-histidyl/O-phospho-L-threonyl-[pyruvate, phosphate dikinase] + AMP + H(+). The catalysed reaction is N(tele)-phospho-L-histidyl/O-phospho-L-threonyl-[pyruvate, phosphate dikinase] + phosphate + H(+) = N(tele)-phospho-L-histidyl/L-threonyl-[pyruvate, phosphate dikinase] + diphosphate. In terms of biological role, bifunctional serine/threonine kinase and phosphorylase involved in the regulation of the pyruvate, phosphate dikinase (PPDK) by catalyzing its phosphorylation/dephosphorylation. The protein is Putative pyruvate, phosphate dikinase regulatory protein of Bacillus cereus (strain 03BB102).